Consider the following 413-residue polypeptide: RNA-binding protein 41 (413 aa).

Over residues 223 to 235 the composition is skewed to polar residues; the sequence is SVGDSGTAESPSL. A disordered region spans residues 223–247; the sequence is SVGDSGTAESPSLLQDKGKQAAQGK. Serine 232 is modified (phosphoserine). The RRM domain maps to 309–387; the sequence is KVLYLKNLSP…KILVIEFGKN (79 aa).

Functionally, may bind RNA. This Homo sapiens (Human) protein is RNA-binding protein 41 (RBM41).